The sequence spans 86 residues: Small ribosomal subunit protein uS17 (86 aa).

This sequence belongs to the universal ribosomal protein uS17 family. In terms of assembly, part of the 30S ribosomal subunit.

One of the primary rRNA binding proteins, it binds specifically to the 5'-end of 16S ribosomal RNA. In Halorhodospira halophila (strain DSM 244 / SL1) (Ectothiorhodospira halophila (strain DSM 244 / SL1)), this protein is Small ribosomal subunit protein uS17.